The primary structure comprises 165 residues: Large ribosomal subunit protein uL30 (165 aa).

It belongs to the universal ribosomal protein uL30 family. In terms of assembly, part of the 50S ribosomal subunit.

In Thermoplasma acidophilum (strain ATCC 25905 / DSM 1728 / JCM 9062 / NBRC 15155 / AMRC-C165), this protein is Large ribosomal subunit protein uL30.